We begin with the raw amino-acid sequence, 212 residues long: Thymidylate kinase (212 aa).

Position 11–18 (11–18) interacts with ATP; sequence GMEGAGKS.

Belongs to the thymidylate kinase family.

It carries out the reaction dTMP + ATP = dTDP + ADP. Its function is as follows. Phosphorylation of dTMP to form dTDP in both de novo and salvage pathways of dTTP synthesis. The protein is Thymidylate kinase of Colwellia psychrerythraea (strain 34H / ATCC BAA-681) (Vibrio psychroerythus).